A 426-amino-acid polypeptide reads, in one-letter code: Putative two-component response regulator ARR20 (426 aa).

Positions 40 to 155 (SNRVLLVGAD…VIAVLWRHVY (116 aa)) constitute a Response regulatory domain. 4-aspartylphosphate is present on D91. A disordered region spans residues 161–216 (KSGLDKPGESGTVESDPDEYDDLEQDNLYESNEEGSKNTCDHKEEKSPTKKPRMQW). The span at 175–193 (SDPDEYDDLEQDNLYESNE) shows a compositional bias: acidic residues. A compositionally biased stretch (basic and acidic residues) spans 194-208 (EGSKNTCDHKEEKSP). The short motif at 210-213 (KKPR) is the Nuclear localization signal element. A DNA-binding region (myb-like GARP) is located at residues 213 to 268 (RMQWTPELHHKFEVAVEKMGSLEKAFPKTILKYMQEELNVQGLTRNNVASHLQKYR).

The protein belongs to the ARR family. Type-B subfamily. Binds the target DNA as a monomer. Two-component system major event consists of a His-to-Asp phosphorelay between a sensor histidine kinase (HK) and a response regulator (RR). In plants, the His-to-Asp phosphorelay involves an additional intermediate named Histidine-containing phosphotransfer protein (HPt). This multistep phosphorelay consists of a His-Asp-His-Asp sequential transfer of a phosphate group between first a His and an Asp of the HK protein, followed by the transfer to a conserved His of the HPt protein and finally the transfer to an Asp in the receiver domain of the RR protein. Predominantly expressed in mature pistil tip. Also detected in the shoot apical meristem as well as vascular tissue and hydathodes of the leaves.

It is found in the nucleus. Putative transcriptional activator that binds specifically to the DNA sequence 5'-[AG]GATT-3'. Functions as a response regulator involved in His-to-Asp phosphorelay signal transduction system. Phosphorylation of the Asp residue in the receiver domain activates the ability of the protein to promote the transcription of target genes. Could directly activate some type-A response regulators in response to cytokinins. This Arabidopsis thaliana (Mouse-ear cress) protein is Putative two-component response regulator ARR20 (ARR20).